The chain runs to 401 residues: tRNA(Met) cytidine acetate ligase (401 aa).

ATP contacts are provided by residues 7–20 (IVEY…HLYH), G102, N164, and R189.

This sequence belongs to the TmcAL family.

It localises to the cytoplasm. It catalyses the reaction cytidine(34) in elongator tRNA(Met) + acetate + ATP = N(4)-acetylcytidine(34) in elongator tRNA(Met) + AMP + diphosphate. In terms of biological role, catalyzes the formation of N(4)-acetylcytidine (ac(4)C) at the wobble position of elongator tRNA(Met), using acetate and ATP as substrates. First activates an acetate ion to form acetyladenylate (Ac-AMP) and then transfers the acetyl group to tRNA to form ac(4)C34. The protein is tRNA(Met) cytidine acetate ligase of Thermoanaerobacter sp. (strain X514).